The sequence spans 948 residues: 3-hydroxy-3-methylglutaryl-coenzyme A reductase (948 aa).

The next 6 membrane-spanning stretches (helical) occupy residues 9–25, 55–71, 96–112, 124–140, 207–223, and 286–302; these read LLFFDCFSTGTFFVLLI, VIIFLVVFVYFIGVLTC, LILFTFALCSLSSVLFV, TSVFLLFSDLSVFFIVL, IIYIMIVFVFLPSFMRI, and CWSTTFVIFVSLIILHL. The N-linked (GlcNAc...) asparagine glycan is linked to Asn316. Residues 347-363 traverse the membrane as a helical segment; sequence VINANLVVYLFLGLFLF. A linker region spans residues 364–466; the sequence is KRIRLNKPIN…MLTEKIKQGL (103 aa). Residue Asn430 is glycosylated (N-linked (GlcNAc...) asparagine). Residues 467-948 are catalytic; sequence GHELSDTEIL…VNPEISHYTM (482 aa). Active-site charge relay system residues include Glu567, Lys699, and Asp777. His869 (proton donor) is an active-site residue. Asn895 carries an N-linked (GlcNAc...) asparagine glycan.

Belongs to the HMG-CoA reductase family.

The protein resides in the endoplasmic reticulum membrane. The protein localises to the peroxisome membrane. It catalyses the reaction (R)-mevalonate + 2 NADP(+) + CoA = (3S)-3-hydroxy-3-methylglutaryl-CoA + 2 NADPH + 2 H(+). The protein operates within metabolic intermediate biosynthesis; (R)-mevalonate biosynthesis; (R)-mevalonate from acetyl-CoA: step 3/3. Functionally, this transmembrane glycoprotein is involved in the control of cholesterol and nonsterol isoprenoid compounds biosynthesis. It is the rate-limiting enzyme of sterol biosynthesis. The polypeptide is 3-hydroxy-3-methylglutaryl-coenzyme A reductase (Schistosoma mansoni (Blood fluke)).